Here is a 501-residue protein sequence, read N- to C-terminus: Lysine--tRNA ligase (501 aa).

Mg(2+)-binding residues include Glu-402 and Glu-409.

Belongs to the class-II aminoacyl-tRNA synthetase family. As to quaternary structure, homodimer. It depends on Mg(2+) as a cofactor.

It is found in the cytoplasm. It catalyses the reaction tRNA(Lys) + L-lysine + ATP = L-lysyl-tRNA(Lys) + AMP + diphosphate. In Helicobacter pylori (strain P12), this protein is Lysine--tRNA ligase.